The following is a 330-amino-acid chain: Anthranilate phosphoribosyltransferase (330 aa).

5-phospho-alpha-D-ribose 1-diphosphate contacts are provided by residues glycine 79, 82 to 83 (GD), threonine 87, 89 to 92 (NIST), 107 to 115 (KHGNYGVSS), and serine 119. Position 79 (glycine 79) interacts with anthranilate. Serine 91 contacts Mg(2+). Residue asparagine 110 coordinates anthranilate. Arginine 165 is an anthranilate binding site. Mg(2+) contacts are provided by aspartate 223 and glutamate 224.

This sequence belongs to the anthranilate phosphoribosyltransferase family. Homodimer. Mg(2+) is required as a cofactor.

The enzyme catalyses N-(5-phospho-beta-D-ribosyl)anthranilate + diphosphate = 5-phospho-alpha-D-ribose 1-diphosphate + anthranilate. Its pathway is amino-acid biosynthesis; L-tryptophan biosynthesis; L-tryptophan from chorismate: step 2/5. Its function is as follows. Catalyzes the transfer of the phosphoribosyl group of 5-phosphorylribose-1-pyrophosphate (PRPP) to anthranilate to yield N-(5'-phosphoribosyl)-anthranilate (PRA). This chain is Anthranilate phosphoribosyltransferase, found in Flavobacterium johnsoniae (strain ATCC 17061 / DSM 2064 / JCM 8514 / BCRC 14874 / CCUG 350202 / NBRC 14942 / NCIMB 11054 / UW101) (Cytophaga johnsonae).